A 1216-amino-acid chain; its full sequence is Coatomer subunit alpha-1 (1216 aa).

8 WD repeats span residues 7 to 48 (TKSN…DRFD), 49 to 88 (EHEGPVRGVHFHNSQPLFVSGGDDYKIKVWNYKNHRCLFT), 91 to 132 (GHLD…SVLT), 133 to 172 (GHNHYVMCASFHPKEDLVVSASLDQTVRVWDIGALRKKTV), 202 to 241 (GHDRGVNWAAFHPTLPLIVSGADDRQVKLWRMNETKAWEV), 246 to 285 (GHMNNVSSVMFHAKQDIIVSNSEDKSIRVWDATKRTGLQT), 288 to 326 (REHDRFWILAVHPEMNLLAAGHDSGMIVFKLERERPAFA), and 363 to 404 (SLNQ…VGRS).

As to quaternary structure, oligomeric complex that consists of at least the alpha, beta, beta', gamma, delta, epsilon and zeta subunits.

It is found in the cytoplasm. The protein resides in the golgi apparatus membrane. It localises to the cytoplasmic vesicle. The protein localises to the COPI-coated vesicle membrane. The coatomer is a cytosolic protein complex that binds to dilysine motifs and reversibly associates with Golgi non-clathrin-coated vesicles, which further mediate biosynthetic protein transport from the ER, via the Golgi up to the trans Golgi network. Coatomer complex is required for budding from Golgi membranes, and is essential for the retrograde Golgi-to-ER transport of dilysine-tagged proteins. The chain is Coatomer subunit alpha-1 from Arabidopsis thaliana (Mouse-ear cress).